The chain runs to 1127 residues: E3 ubiquitin-protein ligase TRIM33 (1127 aa).

The segment covering 1 to 18 (MAENKGGGEAESGGGGSG) has biased composition (gly residues). Positions 1–118 (MAENKGGGEA…PSAGPPPGPP (118 aa)) are disordered. The necessary for E3 ubiquitin-protein ligase activity and repression of SMAD4 signaling and transcriptional repression stretch occupies residues 1 to 147 (MAENKGGGEA…AEPKLLPCLH (147 aa)). Residues 19-37 (SAPVTAGAAGPAAQEAEPP) are compositionally biased toward low complexity. Residues 52–64 (RAGAEGGAAGPDD) are compositionally biased toward gly residues. Residues 65 to 97 (GGVAAASSGSAQAASSPAASVGTGVAGGAVSTP) show a composition bias toward low complexity. A compositionally biased stretch (pro residues) spans 98 to 118 (APAPASAPAPGPSAGPPPGPP). An RING-type zinc finger spans residues 125-154 (CAVCQQSLQSRREAEPKLLPCLHSFCLRCL). 2 consecutive B box-type zinc fingers follow at residues 212-259 (KSEQ…IRKK) and 271-312 (QRPV…YQFL). Cysteine 217, cysteine 220, cysteine 241, histidine 245, cysteine 276, histidine 279, cysteine 299, and histidine 304 together coordinate Zn(2+). Residues 299–401 (CQLLEHKEHR…QMKLLQQQND (103 aa)) form a necessary for oligomerization region. Positions 299-401 (CQLLEHKEHR…QMKLLQQQND (103 aa)) form a coiled coil. Glycyl lysine isopeptide (Lys-Gly) (interchain with G-Cter in SUMO2) cross-links involve residues lysine 329, lysine 334, lysine 481, and lysine 504. Residue arginine 515 is modified to Asymmetric dimethylarginine; alternate. The residue at position 515 (arginine 515) is an Omega-N-methylarginine; alternate. Lysine 527 participates in a covalent cross-link: Glycyl lysine isopeptide (Lys-Gly) (interchain with G-Cter in SUMO2). Residue arginine 535 is modified to Omega-N-methylarginine. The interval 536–563 (MQQPPAPVPTTTTTTQQHPRQAAPQMLQ) is disordered. Arginine 577 carries the asymmetric dimethylarginine modification. Residue arginine 591 is modified to Asymmetric dimethylarginine; alternate. The residue at position 591 (arginine 591) is an Omega-N-methylarginine; alternate. Arginine 598 and arginine 604 each carry asymmetric dimethylarginine. Disordered regions lie at residues 608–629 (PQYS…HAGP), 673–692 (NPEN…EDAG), and 703–818 (YISG…TPPL). Over residues 723-759 (PSALSPGSSGLSNSHTPVRPPSTSSTGSRGSCGSSGR) the composition is skewed to low complexity. An N6-acetyllysine; alternate mark is found at lysine 763 and lysine 769. Glycyl lysine isopeptide (Lys-Gly) (interchain with G-Cter in SUMO2); alternate cross-links involve residues lysine 763 and lysine 769. A Glycyl lysine isopeptide (Lys-Gly) (interchain with G-Cter in SUMO2) cross-link involves residue lysine 774. Residues lysine 776 and lysine 793 each participate in a glycyl lysine isopeptide (Lys-Gly) (interchain with G-Cter in SUMO2); alternate cross-link. Residues lysine 776 and lysine 793 each participate in a glycyl lysine isopeptide (Lys-Gly) (interchain with G-Cter in SUMO1); alternate cross-link. N6-acetyllysine; alternate is present on lysine 793. The segment covering 793-802 (KQEKTEDGRR) has biased composition (basic and acidic residues). Residue lysine 796 forms a Glycyl lysine isopeptide (Lys-Gly) (interchain with G-Cter in SUMO2) linkage. At serine 803 the chain carries Phosphoserine. A compositionally biased stretch (low complexity) spans 807–818 (LSSPESSLTPPL). Position 815 is a phosphothreonine (threonine 815). Lysine 861 participates in a covalent cross-link: Glycyl lysine isopeptide (Lys-Gly) (interchain with G-Cter in SUMO2). Serine 862 bears the Phosphoserine mark. The segment at 887 to 934 (EDWCAVCQNGGDLLCCEKCPKVFHLTCHVPTLLSFPSGDWICTFCRDI) adopts a PHD-type zinc-finger fold. Lysine 951 carries the post-translational modification N6-acetyllysine. At lysine 953 the chain carries N6-acetyllysine; alternate. Lysine 953 participates in a covalent cross-link: Glycyl lysine isopeptide (Lys-Gly) (interchain with G-Cter in SUMO2); alternate. Positions 957–1080 (GLSPVDQRKC…LYFEDKLTEI (124 aa)) constitute a Bromo domain. Glycyl lysine isopeptide (Lys-Gly) (interchain with G-Cter in SUMO2) cross-links involve residues lysine 1007 and lysine 1043. Position 1051 is a phosphothreonine (threonine 1051). Residue lysine 1057 forms a Glycyl lysine isopeptide (Lys-Gly) (interchain with G-Cter in SUMO2) linkage. A disordered region spans residues 1088-1127 (PLPEFEQEEDDGEVTEDSDEDFIQPRRKRLKSDERPVHIK). A compositionally biased stretch (acidic residues) spans 1092–1109 (FEQEEDDGEVTEDSDEDF). At threonine 1102 the chain carries Phosphothreonine. The residue at position 1105 (serine 1105) is a Phosphoserine. Residue lysine 1118 forms a Glycyl lysine isopeptide (Lys-Gly) (interchain with G-Cter in SUMO2) linkage. Residues 1118-1127 (KSDERPVHIK) are compositionally biased toward basic and acidic residues. Residue serine 1119 is modified to Phosphoserine.

The protein belongs to the TRIM/RBCC family. Homooligomer and heterooligomer with TRIM24 and TRIM28 family members. Interacts with SMAD4 in unstimulated cells. Found in a complex with SMAD2 and SMAD3 upon addition of TGF-beta. Interacts with SMAD2 and SMAD3. Interacts with SMAD4 under basal and induced conditions and, upon TGF-beta signaling, with activated SMAD2. Forms a ternary complex with SMAD4 and SMAD2 upon TGF-beta signaling. Post-translationally, sumoylated with SUMO1. In terms of tissue distribution, expressed in stem cells at the bottom of the crypts of the colon (at protein level). Expressed in colon adenomas and adenocarcinomas (at protein level). Expressed in brain, lung, liver, spleen, thymus, prostate, kidney, testis, heart, placenta, pancreas, small intestine, ovary, colon, skeletal muscle and hematopoietic progenitors.

It is found in the nucleus. It catalyses the reaction S-ubiquitinyl-[E2 ubiquitin-conjugating enzyme]-L-cysteine + [acceptor protein]-L-lysine = [E2 ubiquitin-conjugating enzyme]-L-cysteine + N(6)-ubiquitinyl-[acceptor protein]-L-lysine.. It participates in protein modification; protein ubiquitination. Functionally, acts as an E3 ubiquitin-protein ligase. Promotes SMAD4 ubiquitination, nuclear exclusion and degradation via the ubiquitin proteasome pathway. According to PubMed:16751102, does not promote a decrease in the level of endogenous SMAD4. May act as a transcriptional repressor. Inhibits the transcriptional response to TGF-beta/BMP signaling cascade. Plays a role in the control of cell proliferation. Its association with SMAD2 and SMAD3 stimulates erythroid differentiation of hematopoietic stem/progenitor. Monoubiquitinates SMAD4 and acts as an inhibitor of SMAD4-dependent TGF-beta/BMP signaling cascade (Monoubiquitination of SMAD4 hampers its ability to form a stable complex with activated SMAD2/3 resulting in inhibition of TGF-beta/BMP signaling cascade). The protein is E3 ubiquitin-protein ligase TRIM33 (TRIM33) of Homo sapiens (Human).